Reading from the N-terminus, the 323-residue chain is tRNA U34 carboxymethyltransferase (323 aa).

Residues lysine 91, tryptophan 105, lysine 110, glycine 130, 152 to 154, 181 to 182, methionine 196, tyrosine 200, and arginine 315 each bind carboxy-S-adenosyl-L-methionine; these read DPT and IE.

Belongs to the class I-like SAM-binding methyltransferase superfamily. CmoB family. As to quaternary structure, homotetramer.

The catalysed reaction is carboxy-S-adenosyl-L-methionine + 5-hydroxyuridine(34) in tRNA = 5-carboxymethoxyuridine(34) in tRNA + S-adenosyl-L-homocysteine + H(+). Functionally, catalyzes carboxymethyl transfer from carboxy-S-adenosyl-L-methionine (Cx-SAM) to 5-hydroxyuridine (ho5U) to form 5-carboxymethoxyuridine (cmo5U) at position 34 in tRNAs. The chain is tRNA U34 carboxymethyltransferase from Salmonella paratyphi A (strain ATCC 9150 / SARB42).